Reading from the N-terminus, the 306-residue chain is MGNLVIGSRGSELALWQANHIKERLKKECSIESEIQIVKTKGDKILDTPLNKIGGKGLFTKELEELLLKGEIDLAVHSLKDVPVVFEKGLDLACITKRADVRDTFLSVKFPDLMSLPKGAKVGTTSLRRSMQLKLKRQDLDTESLRGNVQTRLKKLECGEFDAIILAEAGLCRLEIQGAKYRKAFSVEEMIPSMGQGALGVEMLKSHKHFATLQKLNDEESAFCCHLERAFVKGLNGGCQIPIGVHASLMGDRVKIRAVLGLPNGKEVIAKERQGDKTKAFDLVQELLEAFLQSGAKEILEKAQLF.

S-(dipyrrolylmethanemethyl)cysteine is present on C239.

The protein belongs to the HMBS family. In terms of assembly, monomer. It depends on dipyrromethane as a cofactor.

The catalysed reaction is 4 porphobilinogen + H2O = hydroxymethylbilane + 4 NH4(+). It participates in porphyrin-containing compound metabolism; protoporphyrin-IX biosynthesis; coproporphyrinogen-III from 5-aminolevulinate: step 2/4. In terms of biological role, tetrapolymerization of the monopyrrole PBG into the hydroxymethylbilane pre-uroporphyrinogen in several discrete steps. The sequence is that of Porphobilinogen deaminase from Helicobacter pylori (strain Shi470).